We begin with the raw amino-acid sequence, 680 residues long: Putative E3 ubiquitin-protein ligase UNKL (680 aa).

The segment at 1–22 (MPSVSKAAAAALSGSPPQTEKP) is disordered. 4 C3H1-type zinc fingers span residues 75–104 (YSPD…HRTT), 115–145 (YYKT…HGPL), 243–277 (QYRS…HSRT), and 283–310 (PEST…HVEK). Low complexity-rich tracts occupy residues 326-337 (TSPSSTGSGQPG), 375-396 (VSSS…SPTA), 465-497 (SLPR…VGSS), and 545-562 (SPSP…SASP). 4 disordered regions span residues 326–358 (TSPS…QDSK), 375–400 (VSSS…LPAP), 442–520 (DGHD…SAAS), and 545–566 (SPSP…NGAE). A coiled-coil region spans residues 563-619 (NGAELARVRRQLDEAKRKIRQWEESWQQVKQVCDAWQREAQEAKERARVADSDRQLA). An RING-type zinc finger spans residues 639–674 (CVACRERAHGAVLRPCQHHILCEPCAATAPECPYCK).

This sequence belongs to the unkempt family. Isoform 4 (C-terminal) interacts with the GTP-bound form of RAC1. Isoform 4 (C-terminal) interacts with SMARCD2/BAF60b. In terms of processing, isoform 4 is ubiquitinated in the C-terminal. Ubiquitination is enhanced by activated RAC1. The presence of the RING finger domain is not essential for ubiquitination to occur.

The protein localises to the cytoplasm. It localises to the nucleus. It functions in the pathway protein modification; protein ubiquitination. In terms of biological role, may participate in a protein complex showing an E3 ligase activity regulated by RAC1. Ubiquitination is directed towards itself and possibly other substrates, such as SMARCD2/BAF60b. Intrinsic E3 ligase activity has not been proven. The chain is Putative E3 ubiquitin-protein ligase UNKL (UNKL) from Homo sapiens (Human).